The chain runs to 1347 residues: DExH-box ATP-dependent RNA helicase DExH11 (1347 aa).

The tract at residues 263-291 (ELEGDDHTAGSESPKAEAEPDAKASISNE) is disordered. The span at 267-284 (DDHTAGSESPKAEAEPDA) shows a compositional bias: basic and acidic residues. Residues 369–524 (ICCLEKGESV…WIGRTKQKEI (156 aa)) enclose the Helicase ATP-binding domain. 382 to 389 (AHTSAGKT) provides a ligand contact to ATP. A DEVH box motif is present at residues 472–475 (DEVH). The interval 566–625 (SQKKKNSNAVSVAPKQQMGSSAHQDGSKSQKHEAHSRGKQNKHSSVKDVGKSSYSGNSQN) is disordered. The span at 590–601 (DGSKSQKHEAHS) shows a compositional bias: basic and acidic residues. The Helicase C-terminal domain occupies 673 to 838 (DLTSSSEKSE…LTYIMILHLL (166 aa)).

This sequence belongs to the DExH box helicase family. SKI2 subfamily. Component of the cytoplasmic SKI complex, which consists of SKI2, SKI3 and VIP3/SKI8. Expressed in vascular tissues of leaves and roots of young plants.

Its subcellular location is the cytoplasm. It carries out the reaction ATP + H2O = ADP + phosphate + H(+). In terms of biological role, component of the SKI complex which is thought to be involved in exosome-mediated RNA decay and associates with transcriptionally active genes in a manner dependent on PAF1 complex (PAF1C). Involved in the regulation of potassium deprivation stress response. The polypeptide is DExH-box ATP-dependent RNA helicase DExH11 (Arabidopsis thaliana (Mouse-ear cress)).